We begin with the raw amino-acid sequence, 618 residues long: UvrABC system protein C (618 aa).

The GIY-YIG domain occupies 13–92 (DKPGVYLMKN…IKKYRPKYNI (80 aa)). A UVR domain is found at 204 to 239 (LDIVENFKLNMEKAAENLEFEKAAMLRDKINIIEKI).

This sequence belongs to the UvrC family. In terms of assembly, interacts with UvrB in an incision complex.

The protein resides in the cytoplasm. The UvrABC repair system catalyzes the recognition and processing of DNA lesions. UvrC both incises the 5' and 3' sides of the lesion. The N-terminal half is responsible for the 3' incision and the C-terminal half is responsible for the 5' incision. The sequence is that of UvrABC system protein C from Clostridium botulinum (strain Okra / Type B1).